Consider the following 183-residue polypeptide: Dual-action ribosomal maturation protein DarP (183 aa).

Positions 1-27 (MSSHSQEPVGEENFDDSEYDRPSKSQV) are disordered. The segment covering 9-18 (VGEENFDDSE) has biased composition (acidic residues).

The protein belongs to the DarP family.

The protein localises to the cytoplasm. Functionally, member of a network of 50S ribosomal subunit biogenesis factors which assembles along the 30S-50S interface, preventing incorrect 23S rRNA structures from forming. Promotes peptidyl transferase center (PTC) maturation. This chain is Dual-action ribosomal maturation protein DarP, found in Bordetella parapertussis (strain 12822 / ATCC BAA-587 / NCTC 13253).